The primary structure comprises 278 residues: Probable endonuclease 4 (278 aa).

Positions 69, 109, 145, 179, 182, 216, 229, 231, and 261 each coordinate Zn(2+).

This sequence belongs to the AP endonuclease 2 family. It depends on Zn(2+) as a cofactor.

The catalysed reaction is Endonucleolytic cleavage to 5'-phosphooligonucleotide end-products.. Endonuclease IV plays a role in DNA repair. It cleaves phosphodiester bonds at apurinic or apyrimidinic (AP) sites, generating a 3'-hydroxyl group and a 5'-terminal sugar phosphate. The protein is Probable endonuclease 4 of Buchnera aphidicola subsp. Baizongia pistaciae (strain Bp).